The primary structure comprises 991 residues: Mediator of RNA polymerase II transcription subunit 5 (991 aa).

It belongs to the Mediator complex subunit 5 family. As to quaternary structure, component of the Mediator complex.

It is found in the nucleus. In terms of biological role, component of the Mediator complex, a coactivator involved in the regulated transcription of nearly all RNA polymerase II-dependent genes. Mediator functions as a bridge to convey information from gene-specific regulatory proteins to the basal RNA polymerase II transcription machinery. Mediator is recruited to promoters by direct interactions with regulatory proteins and serves as a scaffold for the assembly of a functional preinitiation complex with RNA polymerase II and the general transcription factors. The polypeptide is Mediator of RNA polymerase II transcription subunit 5 (NUT1) (Yarrowia lipolytica (strain CLIB 122 / E 150) (Yeast)).